The chain runs to 273 residues: Undecaprenyl-diphosphatase (273 aa).

Transmembrane regions (helical) follow at residues Gly13–Asn35, Val45–Tyr62, Phe82–Lys102, Leu108–Val128, Thr186–Leu206, Leu219–Leu239, and Phe250–Ile270.

This sequence belongs to the UppP family.

It is found in the cell inner membrane. It catalyses the reaction di-trans,octa-cis-undecaprenyl diphosphate + H2O = di-trans,octa-cis-undecaprenyl phosphate + phosphate + H(+). Its function is as follows. Catalyzes the dephosphorylation of undecaprenyl diphosphate (UPP). Confers resistance to bacitracin. The sequence is that of Undecaprenyl-diphosphatase from Neisseria meningitidis serogroup A / serotype 4A (strain DSM 15465 / Z2491).